We begin with the raw amino-acid sequence, 440 residues long: Chromosomal replication initiator protein DnaA (440 aa).

A domain I, interacts with DnaA modulators region spans residues 1–93 (MNVQLNEIWN…QTPVKPVAQE (93 aa)). The tract at residues 94-101 (YTEDSNMS) is domain II. Residues 102–318 (FLNPKYTFDT…GALNRVIAYS (217 aa)) form a domain III, AAA+ region region. Residues G146, G148, K149, and T150 each coordinate ATP. A domain IV, binds dsDNA region spans residues 319 to 440 (TLTENIINVD…EEIKKNITGG (122 aa)).

It belongs to the DnaA family. In terms of assembly, oligomerizes as a right-handed, spiral filament on DNA at oriC.

It localises to the cytoplasm. Functionally, plays an essential role in the initiation and regulation of chromosomal replication. ATP-DnaA binds to the origin of replication (oriC) to initiate formation of the DNA replication initiation complex once per cell cycle. Binds the DnaA box (a 9 base pair repeat at the origin) and separates the double-stranded (ds)DNA. Forms a right-handed helical filament on oriC DNA; dsDNA binds to the exterior of the filament while single-stranded (ss)DNA is stabiized in the filament's interior. The ATP-DnaA-oriC complex binds and stabilizes one strand of the AT-rich DNA unwinding element (DUE), permitting loading of DNA polymerase. After initiation quickly degrades to an ADP-DnaA complex that is not apt for DNA replication. Binds acidic phospholipids. This Ruminiclostridium cellulolyticum (strain ATCC 35319 / DSM 5812 / JCM 6584 / H10) (Clostridium cellulolyticum) protein is Chromosomal replication initiator protein DnaA.